The following is a 298-amino-acid chain: ADP/ATP translocase 2 (298 aa).

Methionine 1 is subject to N-acetylmethionine. Residues 1–7 (MTDAAVS) are Mitochondrial intermembrane-facing. Threonine 2 is modified (N-acetylthreonine; in ADP/ATP translocase 2, N-terminally processed). Residues 6 to 98 (VSFAKDFLAG…FAFKDKYKQI (93 aa)) form a Solcar 1 repeat. Serine 7 carries the post-translational modification Phosphoserine. Residues 8 to 37 (FAKDFLAGGVAAAISKTAVAPIERVKLLLQ) traverse the membrane as a helical segment. Residue lysine 23 is modified to N6-malonyllysine. Topologically, residues 38-74 (VQHASKQITADKQYKGIMDCVVRIPKEQGVLSFWRGN) are mitochondrial matrix. Lysine 43 is modified (N6-succinyllysine). Lysine 52 bears the N6,N6,N6-trimethyllysine; alternate mark. The residue at position 52 (lysine 52) is an N6,N6-dimethyllysine; alternate. Lysine 52 carries the post-translational modification N6-methyllysine; alternate. A helical membrane pass occupies residues 75–99 (LANVIRYFPTQALNFAFKDKYKQIF). Residues arginine 80 and lysine 92 each contribute to the ADP site. N6-malonyllysine occurs at positions 92 and 96. Over 100–109 (LGGVDKRTQF) the chain is Mitochondrial intermembrane. An N6-acetyllysine; alternate modification is found at lysine 105. Lysine 105 carries the post-translational modification N6-succinyllysine; alternate. The chain crosses the membrane as a helical span at residues 110–130 (WRYFAGNLASGGAAGATSLCF). Solcar repeat units follow at residues 111 to 201 (RYFA…AKGM) and 212 to 297 (ISWM…IKKY). Residues 131–178 (VYPLDFARTRLAADVGKAGDAREFKGLGDCLVKITKSDGIRGLYQGFN) are Mitochondrial matrix-facing. Lysine 147 carries the post-translational modification N6-methyllysine; alternate. N6-acetyllysine; alternate is present on residues lysine 147 and lysine 155. N6-succinyllysine; alternate occurs at positions 147 and 155. Residue lysine 147 is modified to N6-malonyllysine; alternate. An N6-acetyllysine mark is found at lysine 163 and lysine 166. A helical transmembrane segment spans residues 179 to 199 (VSVQGIIIYRAAYFGIYDTAK). At 200–210 (GMLPDPKNTHI) the chain is on the mitochondrial intermembrane side. A helical transmembrane segment spans residues 211-231 (FISWMIAQSVTAVAGLTSYPF). At 232–273 (DTVRRRMMMQSGRKGSDIMYTGTIDCWKKIARDEGSKAFFKG) the chain is on the mitochondrial matrix side. Arginine 235 serves as a coordination point for ADP. Positions 235–240 (RRRMMM) are important for transport activity. The Nucleotide carrier signature motif signature appears at 235–240 (RRRMMM). Lysine 268 bears the N6-acetyllysine; alternate mark. At lysine 268 the chain carries N6-succinyllysine; alternate. Residues 274 to 291 (AWSNVLRGMGGAFVLVLY) form a helical membrane-spanning segment. Topologically, residues 292 to 298 (DEIKKYT) are mitochondrial intermembrane.

It belongs to the mitochondrial carrier (TC 2.A.29) family. As to quaternary structure, monomer. Component of the MMXD complex, which includes CIAO1, ERCC2, CIAO2B, MMS19 and SLC25A5/ANT2. Interacts with AK4. Interacts with TIMM44; leading to inhibit the presequence translocase TIMM23, thereby promoting stabilization of PINK1. Post-translationally, trimethylated by ANTKMT at Lys-52.

It localises to the mitochondrion inner membrane. It is found in the membrane. It catalyses the reaction ADP(in) + ATP(out) = ADP(out) + ATP(in). The enzyme catalyses H(+)(in) = H(+)(out). With respect to regulation, the matrix-open state (m-state) is inhibited by the membrane-permeable bongkrekic acid (BKA). The cytoplasmic-open state (c-state) is inhibited by the membrane-impermeable toxic inhibitor carboxyatractyloside (CATR). Proton transporter activity is inhibited by ADP:ATP antiporter activity. ADP:ATP antiporter that mediates import of ADP into the mitochondrial matrix for ATP synthesis, and export of ATP out to fuel the cell. Cycles between the cytoplasmic-open state (c-state) and the matrix-open state (m-state): operates by the alternating access mechanism with a single substrate-binding site intermittently exposed to either the cytosolic (c-state) or matrix (m-state) side of the inner mitochondrial membrane. In addition to its ADP:ATP antiporter activity, also involved in mitochondrial uncoupling and mitochondrial permeability transition pore (mPTP) activity. Plays a role in mitochondrial uncoupling by acting as a proton transporter: proton transport uncouples the proton flows via the electron transport chain and ATP synthase to reduce the efficiency of ATP production and cause mitochondrial thermogenesis. Proton transporter activity is inhibited by ADP:ATP antiporter activity, suggesting that SLC25A5/ANT2 acts as a master regulator of mitochondrial energy output by maintaining a delicate balance between ATP production (ADP:ATP antiporter activity) and thermogenesis (proton transporter activity). Proton transporter activity requires free fatty acids as cofactor, but does not transport it. Probably mediates mitochondrial uncoupling in tissues that do not express UCP1. Also plays a key role in mPTP opening, a non-specific pore that enables free passage of the mitochondrial membranes to solutes of up to 1.5 kDa, and which contributes to cell death. It is however unclear if SLC25A5/ANT2 constitutes a pore-forming component of mPTP or regulates it. Acts as a regulator of mitophagy independently of ADP:ATP antiporter activity: promotes mitophagy via interaction with TIMM44, leading to inhibit the presequence translocase TIMM23, thereby promoting stabilization of PINK1. As part of the mitotic spindle-associated MMXD complex it may play a role in chromosome segregation. This is ADP/ATP translocase 2 from Tachyglossus aculeatus aculeatus (Southeast Australian short-beaked echidna).